The primary structure comprises 199 residues: Ciliary neurotrophic factor (199 aa).

Belongs to the CNTF family. Nervous system.

The protein resides in the cytoplasm. Functionally, CNTF is a survival factor for various neuronal cell types. Seems to prevent the degeneration of motor axons after axotomy. The polypeptide is Ciliary neurotrophic factor (CNTF) (Oryctolagus cuniculus (Rabbit)).